The sequence spans 386 residues: Succinate--CoA ligase [ADP-forming] subunit beta (386 aa).

Residues 9-244 (KALFREHGIP…ETQEDAREAR (236 aa)) enclose the ATP-grasp domain. Residues lysine 46, 53–55 (GRG), glutamate 99, threonine 102, and glutamate 107 contribute to the ATP site. 2 residues coordinate Mg(2+): asparagine 199 and aspartate 213. Substrate-binding positions include asparagine 264 and 321 to 323 (GIV).

It belongs to the succinate/malate CoA ligase beta subunit family. As to quaternary structure, heterotetramer of two alpha and two beta subunits. Requires Mg(2+) as cofactor.

It catalyses the reaction succinate + ATP + CoA = succinyl-CoA + ADP + phosphate. It carries out the reaction GTP + succinate + CoA = succinyl-CoA + GDP + phosphate. It functions in the pathway carbohydrate metabolism; tricarboxylic acid cycle; succinate from succinyl-CoA (ligase route): step 1/1. Its function is as follows. Succinyl-CoA synthetase functions in the citric acid cycle (TCA), coupling the hydrolysis of succinyl-CoA to the synthesis of either ATP or GTP and thus represents the only step of substrate-level phosphorylation in the TCA. The beta subunit provides nucleotide specificity of the enzyme and binds the substrate succinate, while the binding sites for coenzyme A and phosphate are found in the alpha subunit. The polypeptide is Succinate--CoA ligase [ADP-forming] subunit beta (Thioalkalivibrio sulfidiphilus (strain HL-EbGR7)).